Reading from the N-terminus, the 425-residue chain is UPF0597 protein VIBHAR_03081 (425 aa).

It belongs to the UPF0597 family.

The sequence is that of UPF0597 protein VIBHAR_03081 from Vibrio campbellii (strain ATCC BAA-1116).